The chain runs to 233 residues: Probable cyclic nucleotide phosphodiesterase COSY_0614 (233 aa).

7 residues coordinate Fe cation: aspartate 10, histidine 12, aspartate 48, asparagine 78, histidine 144, histidine 183, and histidine 185. AMP contacts are provided by residues histidine 12, aspartate 48, and 78–79 (NH). Histidine 185 contacts AMP.

This sequence belongs to the cyclic nucleotide phosphodiesterase class-III family. The cofactor is Fe(2+).

This Vesicomyosocius okutanii subsp. Calyptogena okutanii (strain HA) protein is Probable cyclic nucleotide phosphodiesterase COSY_0614.